The sequence spans 291 residues: Ribosomal RNA small subunit methyltransferase A (291 aa).

The S-adenosyl-L-methionine site is built by N33, V35, G60, E81, D111, and N129.

This sequence belongs to the class I-like SAM-binding methyltransferase superfamily. rRNA adenine N(6)-methyltransferase family. RsmA subfamily.

The protein localises to the cytoplasm. It catalyses the reaction adenosine(1518)/adenosine(1519) in 16S rRNA + 4 S-adenosyl-L-methionine = N(6)-dimethyladenosine(1518)/N(6)-dimethyladenosine(1519) in 16S rRNA + 4 S-adenosyl-L-homocysteine + 4 H(+). Its function is as follows. Specifically dimethylates two adjacent adenosines (A1518 and A1519) in the loop of a conserved hairpin near the 3'-end of 16S rRNA in the 30S particle. May play a critical role in biogenesis of 30S subunits. The chain is Ribosomal RNA small subunit methyltransferase A from Streptomyces griseus subsp. griseus (strain JCM 4626 / CBS 651.72 / NBRC 13350 / KCC S-0626 / ISP 5235).